Here is a 304-residue protein sequence, read N- to C-terminus: Dihydroorotate dehydrogenase B (NAD(+)), catalytic subunit (304 aa).

Residues Ser22 and 46 to 47 contribute to the FMN site; that span reads KA. Substrate is bound by residues Lys46 and 70–74; that span reads NAIGL. Residues Asn100 and Asn128 each coordinate FMN. Substrate is bound at residue Asn128. Cys131 functions as the Nucleophile in the catalytic mechanism. The FMN site is built by Lys166 and Ile192. 193-194 is a binding site for substrate; that stretch reads NT. Residues Gly218, 244–245, and 266–267 contribute to the FMN site; these read GG and GT.

This sequence belongs to the dihydroorotate dehydrogenase family. Type 1 subfamily. Heterotetramer of 2 PyrK and 2 PyrD type B subunits. Requires FMN as cofactor.

Its subcellular location is the cytoplasm. It carries out the reaction (S)-dihydroorotate + NAD(+) = orotate + NADH + H(+). Its pathway is pyrimidine metabolism; UMP biosynthesis via de novo pathway; orotate from (S)-dihydroorotate (NAD(+) route): step 1/1. Its function is as follows. Catalyzes the conversion of dihydroorotate to orotate with NAD(+) as electron acceptor. The polypeptide is Dihydroorotate dehydrogenase B (NAD(+)), catalytic subunit (pyrD) (Fusobacterium nucleatum subsp. nucleatum (strain ATCC 25586 / DSM 15643 / BCRC 10681 / CIP 101130 / JCM 8532 / KCTC 2640 / LMG 13131 / VPI 4355)).